A 156-amino-acid chain; its full sequence is Cell division protein SepF (156 aa).

Belongs to the SepF family. Homodimer. Interacts with FtsZ.

It localises to the cytoplasm. Cell division protein that is part of the divisome complex and is recruited early to the Z-ring. Probably stimulates Z-ring formation, perhaps through the cross-linking of FtsZ protofilaments. Its function overlaps with FtsA. The sequence is that of Cell division protein SepF from Ruminiclostridium cellulolyticum (strain ATCC 35319 / DSM 5812 / JCM 6584 / H10) (Clostridium cellulolyticum).